Here is an 886-residue protein sequence, read N- to C-terminus: uncharacterized protein (886 aa).

Residues 1 to 20 (MKILKSLVLLVLFIVMPAKA) form the signal peptide. Helical transmembrane passes span 520-540 (VIIF…IEVI), 563-583 (TYFF…VVGA), 609-629 (LLFI…IITI), 647-667 (IIAF…IILM), 680-700 (ISTL…FLLI), and 771-791 (FLVL…SYGL).

This sequence belongs to the TrbL/VirB6 family.

It localises to the cell membrane. This is an uncharacterized protein from Rickettsia typhi (strain ATCC VR-144 / Wilmington).